Reading from the N-terminus, the 83-residue chain is Putative beta-neurotoxin RjAa10f (83 aa).

A signal peptide spans 1–18 (MKILIFIIASFMLIGVWC). The LCN-type CS-alpha/beta domain occupies 19 to 82 (KEGYPMGRDG…VWDPNNNKCV (64 aa)). 4 disulfides stabilise this stretch: Cys-29–Cys-81, Cys-33–Cys-55, Cys-40–Cys-62, and Cys-44–Cys-64.

It belongs to the long (4 C-C) scorpion toxin superfamily. Sodium channel inhibitor family. Beta subfamily. In terms of tissue distribution, expressed by the venom gland.

It is found in the secreted. Functionally, beta toxins bind voltage-independently at site-4 of sodium channels (Nav) and shift the voltage of activation toward more negative potentials thereby affecting sodium channel activation and promoting spontaneous and repetitive firing. The sequence is that of Putative beta-neurotoxin RjAa10f from Rhopalurus junceus (Caribbean blue scorpion).